The following is a 1173-amino-acid chain: AT-rich interactive domain-containing protein 5B (1173 aa).

A Glycyl lysine isopeptide (Lys-Gly) (interchain with G-Cter in SUMO2) cross-link involves residue K130. The tract at residues 249–283 is disordered; it reads PNLKGRPRKKKPCPQRRDSFSGGKDPNNNSDGKSV. Positions 253-262 are enriched in basic residues; the sequence is GRPRKKKPCP. S267 is modified (phosphoserine). Residues 322–414 enclose the ARID domain; the sequence is RADEQAFLVA…LILPYERFIK (93 aa). K340 bears the N6,N6-dimethyllysine mark. Positions 416 to 607 are disordered; sequence EEDKPLPPIK…QPPLANQSEV (192 aa). Residue K449 forms a Glycyl lysine isopeptide (Lys-Gly) (interchain with G-Cter in SUMO2) linkage. Over residues 450 to 462 the composition is skewed to basic and acidic residues; that stretch reads HEISKSKKEKENA. Glycyl lysine isopeptide (Lys-Gly) (interchain with G-Cter in SUMO2) cross-links involve residues K497 and K499. Low complexity predominate over residues 547–557; that stretch reads SAPLAPTPGTG. Residues 593-605 show a composition bias toward polar residues; that stretch reads GFSTTQPPLANQS. Glycyl lysine isopeptide (Lys-Gly) (interchain with G-Cter in SUMO2) cross-links involve residues K763 and K769. Disordered stretches follow at residues 777–802, 877–924, and 936–965; these read EPRFSFSKHHLSPSKKSRGRRTVEKR, KKSA…GTSQ, and HPKACRVSPMTMSAPKKYPEALSRSGKPHP. Over residues 782–796 the composition is skewed to basic residues; that stretch reads FSKHHLSPSKKSRGR. Residues K878, K901, K905, and K920 each participate in a glycyl lysine isopeptide (Lys-Gly) (interchain with G-Cter in SUMO2) cross-link. Residues K973, K985, and K998 each participate in a glycyl lysine isopeptide (Lys-Gly) (interchain with G-Cter in SUMO2) cross-link. Position 1017 is a phosphoserine (S1017). Positions 1017 to 1055 are disordered; the sequence is SPLDPAKEVSGKEKASEQESEGSKAAHSGHSGGTSEGHK. Over residues 1021–1040 the composition is skewed to basic and acidic residues; the sequence is PAKEVSGKEKASEQESEGSK. Residues K1040 and K1055 each participate in a glycyl lysine isopeptide (Lys-Gly) (interchain with G-Cter in SUMO2) cross-link. S1118 bears the Phosphoserine mark.

This sequence belongs to the ARID5B family. Methylation at Lys-340 prevents DNA-binding. Demethylation by PHF2 promotes recruitment of the PHF2-ARID5B complex to promoters.

It localises to the nucleus. Transcription coactivator that binds to the 5'-AATA[CT]-3' core sequence and plays a key role in adipogenesis and liver development. Acts by forming a complex with phosphorylated PHF2, which mediates demethylation at Lys-340, leading to target the PHF2-ARID5B complex to target promoters, where PHF2 mediates demethylation of dimethylated 'Lys-9' of histone H3 (H3K9me2), followed by transcription activation of target genes. The PHF2-ARID5B complex acts as a coactivator of HNF4A in liver. Required for adipogenesis: regulates triglyceride metabolism in adipocytes by regulating expression of adipogenic genes. Overexpression leads to induction of smooth muscle marker genes, suggesting that it may also act as a regulator of smooth muscle cell differentiation and proliferation. This Bos taurus (Bovine) protein is AT-rich interactive domain-containing protein 5B (ARID5B).